A 317-amino-acid chain; its full sequence is UV DNA damage endonuclease (317 aa).

It belongs to the uve1/UvsE family.

Component in a DNA repair pathway. Removal of UV LIGHT damaged nucleotides. Recognizes pyrimidine dimers and cleave a phosphodiester bond immediately 5' to the lesion. The sequence is that of UV DNA damage endonuclease from Bacillus cereus (strain ATCC 10987 / NRS 248).